We begin with the raw amino-acid sequence, 204 residues long: Urease accessory protein UreG (204 aa).

12-19 (GPVGSGKT) provides a ligand contact to GTP.

It belongs to the SIMIBI class G3E GTPase family. UreG subfamily. In terms of assembly, homodimer. UreD, UreF and UreG form a complex that acts as a GTP-hydrolysis-dependent molecular chaperone, activating the urease apoprotein by helping to assemble the nickel containing metallocenter of UreC. The UreE protein probably delivers the nickel.

It localises to the cytoplasm. Facilitates the functional incorporation of the urease nickel metallocenter. This process requires GTP hydrolysis, probably effectuated by UreG. The chain is Urease accessory protein UreG from Pseudomonas fluorescens (strain ATCC BAA-477 / NRRL B-23932 / Pf-5).